A 424-amino-acid chain; its full sequence is DNA repair protein Rad60 (424 aa).

Y26 is modified (phosphotyrosine). Phosphoserine is present on residues S32 and S34. The interval 45 to 177 (LPKKSTKTGK…LTTTTSNSAS (133 aa)) is disordered. A compositionally biased stretch (basic residues) spans 48–57 (KSTKTGKRKN). The segment covering 77–93 (QAEHKAVEPEEDMRTER) has biased composition (basic and acidic residues). The residue at position 96 (S96) is a Phosphoserine. Positions 104–123 (EMEKKNGQQSDVEKHAKEND) are enriched in basic and acidic residues. A compositionally biased stretch (basic residues) spans 156–166 (KPKKRGQKKRT). Low complexity predominate over residues 167-177 (SLTTTTSNSAS).

Forms a complex with dgrn; likely required for localization to the nuclear periphery. Interacts with the SMC5-SMC6 complex members SMC5 and SMC6/jnj following ionizing radiation (IR) to induce DNA damage. Interaction between the SMC5-SMC6 complex and the dgrn-Rad60 complex, may stabilize the association of heterochromatic DSBs with the nuclear periphery.

The protein resides in the nucleus. It localises to the nucleoplasm. Required for repair of DNA double strand breaks which occur during replication or are induced by ionizing radiation (IR). Functions with dgrn and downstream of the SMC5-SMC6 complex to regulate strand break repair. Likely functions by stabilizing the association of heterochromatic double strand breaks (DSBs) with the nuclear periphery as part of the homologous recombination (HR) repair process. This is DNA repair protein Rad60 from Drosophila melanogaster (Fruit fly).